A 1007-amino-acid chain; its full sequence is Probable beta-galactosidase A (1007 aa).

Residues 1–18 form the signal peptide; it reads MRLLPVWTAALLAAQAAG. Substrate-binding residues include tyrosine 96, asparagine 140, alanine 141, and glutamate 142. The N-linked (GlcNAc...) asparagine glycan is linked to asparagine 156. Asparagine 199 provides a ligand contact to substrate. Catalysis depends on glutamate 200, which acts as the Proton donor. An intrachain disulfide couples cysteine 205 to cysteine 206. Tyrosine 260 is a substrate binding site. A disulfide bridge connects residues cysteine 266 and cysteine 315. Glutamate 298 serves as the catalytic Nucleophile. Tyrosine 364 serves as a coordination point for substrate. N-linked (GlcNAc...) asparagine glycosylation is found at asparagine 405, asparagine 422, asparagine 621, asparagine 740, asparagine 775, and asparagine 914.

Belongs to the glycosyl hydrolase 35 family.

Its subcellular location is the secreted. The catalysed reaction is Hydrolysis of terminal non-reducing beta-D-galactose residues in beta-D-galactosides.. Its function is as follows. Cleaves beta-linked terminal galactosyl residues from gangliosides, glycoproteins, and glycosaminoglycans. The protein is Probable beta-galactosidase A (lacA) of Emericella nidulans (strain FGSC A4 / ATCC 38163 / CBS 112.46 / NRRL 194 / M139) (Aspergillus nidulans).